An 815-amino-acid polypeptide reads, in one-letter code: Phenylalanine--tRNA ligase beta subunit (815 aa).

A tRNA-binding domain is found at 39–148 (SKELQKFEVA…KDAVVGDNFT (110 aa)). The B5 domain maps to 421-496 (PQKKPLDFSV…RIYGYDKIES (76 aa)). Mg(2+)-binding residues include aspartate 474, aspartate 480, glutamate 483, and glutamate 484. Residues 721–814 (SDYQANFRDY…ISQKFQGILR (94 aa)) enclose the FDX-ACB domain.

The protein belongs to the phenylalanyl-tRNA synthetase beta subunit family. Type 1 subfamily. Tetramer of two alpha and two beta subunits. The cofactor is Mg(2+).

Its subcellular location is the cytoplasm. The enzyme catalyses tRNA(Phe) + L-phenylalanine + ATP = L-phenylalanyl-tRNA(Phe) + AMP + diphosphate + H(+). This is Phenylalanine--tRNA ligase beta subunit (pheT) from Rickettsia prowazekii (strain Madrid E).